A 278-amino-acid polypeptide reads, in one-letter code: 4-diphosphocytidyl-2-C-methyl-D-erythritol kinase (278 aa).

The active site involves K9. 93 to 103 (PLGGGLGGGSS) contributes to the ATP binding site. Residue D135 is part of the active site.

This sequence belongs to the GHMP kinase family. IspE subfamily.

It carries out the reaction 4-CDP-2-C-methyl-D-erythritol + ATP = 4-CDP-2-C-methyl-D-erythritol 2-phosphate + ADP + H(+). It functions in the pathway isoprenoid biosynthesis; isopentenyl diphosphate biosynthesis via DXP pathway; isopentenyl diphosphate from 1-deoxy-D-xylulose 5-phosphate: step 3/6. Its function is as follows. Catalyzes the phosphorylation of the position 2 hydroxy group of 4-diphosphocytidyl-2C-methyl-D-erythritol. This is 4-diphosphocytidyl-2-C-methyl-D-erythritol kinase from Nitrosomonas eutropha (strain DSM 101675 / C91 / Nm57).